Reading from the N-terminus, the 275-residue chain is Large ribosomal subunit protein uL2 (275 aa).

Residues 212 to 259 form a disordered region; the sequence is RWKGIRPTNRGVTMNPVDHPHGGGEGKTSGGRHPVTPWGQPTRGYKTR.

It belongs to the universal ribosomal protein uL2 family. In terms of assembly, part of the 50S ribosomal subunit. Forms a bridge to the 30S subunit in the 70S ribosome.

Its function is as follows. One of the primary rRNA binding proteins. Required for association of the 30S and 50S subunits to form the 70S ribosome, for tRNA binding and peptide bond formation. It has been suggested to have peptidyltransferase activity; this is somewhat controversial. Makes several contacts with the 16S rRNA in the 70S ribosome. In Acidobacterium capsulatum (strain ATCC 51196 / DSM 11244 / BCRC 80197 / JCM 7670 / NBRC 15755 / NCIMB 13165 / 161), this protein is Large ribosomal subunit protein uL2.